A 246-amino-acid chain; its full sequence is UDP-N-acetyl-D-mannosaminuronic acid transferase (246 aa).

This sequence belongs to the glycosyltransferase 26 family.

The enzyme catalyses UDP-N-acetyl-alpha-D-mannosaminouronate + N-acetyl-alpha-D-glucosaminyl-di-trans,octa-cis-undecaprenyl diphosphate = beta-D-ManNAcA-(1-&gt;4)-alpha-D-GlcNAc-di-trans,octa-cis-undecaprenyl diphosphate + UDP + H(+). Its pathway is bacterial outer membrane biogenesis; enterobacterial common antigen biosynthesis. In terms of biological role, catalyzes the synthesis of Und-PP-GlcNAc-ManNAcA (Lipid II), the second lipid-linked intermediate involved in enterobacterial common antigen (ECA) synthesis. The polypeptide is UDP-N-acetyl-D-mannosaminuronic acid transferase (Yersinia pestis bv. Antiqua (strain Antiqua)).